The primary structure comprises 1243 residues: ATP-dependent helicase/nuclease subunit A (1243 aa).

In terms of domain architecture, UvrD-like helicase ATP-binding spans 2-475; it reads VNWTKEQEEA…IDLARNFRSR (474 aa). An ATP-binding site is contributed by 23 to 30; that stretch reads AAAGSGKT. A UvrD-like helicase C-terminal domain is found at 502–803; sequence AAELIYGNKM…RIMTIHKSKG (302 aa).

The protein belongs to the helicase family. AddA subfamily. As to quaternary structure, heterodimer of AddA and AddB/RexB. It depends on Mg(2+) as a cofactor.

It catalyses the reaction Couples ATP hydrolysis with the unwinding of duplex DNA by translocating in the 3'-5' direction.. It carries out the reaction ATP + H2O = ADP + phosphate + H(+). The heterodimer acts as both an ATP-dependent DNA helicase and an ATP-dependent, dual-direction single-stranded exonuclease. Recognizes the chi site generating a DNA molecule suitable for the initiation of homologous recombination. The AddA nuclease domain is required for chi fragment generation; this subunit has the helicase and 3' -&gt; 5' nuclease activities. In Oceanobacillus iheyensis (strain DSM 14371 / CIP 107618 / JCM 11309 / KCTC 3954 / HTE831), this protein is ATP-dependent helicase/nuclease subunit A.